Reading from the N-terminus, the 141-residue chain is Sigma factor binding protein 2, chloroplastic (141 aa).

Residues 1-20 show a composition bias toward polar residues; it reads MDQSSSTLLINQRKSSSSPT. Residues 1 to 36 are disordered; that stretch reads MDQSSSTLLINQRKSSSSPTRIPPKQKRKSTTTHKP. The transit peptide at 1–38 directs the protein to the chloroplast; that stretch reads MDQSSSTLLINQRKSSSSPTRIPPKQKRKSTTTHKPIK. The Bipartite nuclear localization signal motif lies at 13–29; that stretch reads RKSSSSPTRIPPKQKRK. The segment covering 24–36 has biased composition (basic residues); it reads PKQKRKSTTTHKP. Positions 55 to 64 match the VQ motif; sequence FRELVQELTG.

As to quaternary structure, interacts with sigma factors in chloroplast. Interacts with WRKY33 in the nucleus.

It is found in the plastid. The protein resides in the chloroplast. It localises to the nucleus. Functionally, functions as activator of WRKY33 in plant defense against necrotrophic pathogens by stimulating the DNA-binding activity of WRKY33. The polypeptide is Sigma factor binding protein 2, chloroplastic (SIB2) (Arabidopsis thaliana (Mouse-ear cress)).